Reading from the N-terminus, the 380-residue chain is Zinc finger protein neuro-d4 (380 aa).

Positions 132 to 164 (ALLDCQKPPPGDFAHDAEGDEMEDDAPRRKNKA) are disordered. The segment at 190 to 213 (YVCDICGKRYKNRPGLSYHYTHTH) adopts a C2H2-type zinc-finger fold. 2 consecutive PHD-type zinc fingers follow at residues 262-321 (EGPC…CKNC) and 318-368 (CKNC…CLRQ). Zn(2+)-binding residues include C265, C268, C286, C289, H294, C297, C315, C318, C321, C324, C336, C339, H344, C347, C362, and C365.

This sequence belongs to the requiem/DPF family. In terms of assembly, component of neuron-specific chromatin remodeling complex (nBAF complex), a subfamily of ATP-dependent SWI/SNF chromatin remodeling complexes.

The protein localises to the cytoplasm. It localises to the nucleus. In terms of biological role, may have an important role in developing neurons by participating in regulation of cell survival, possibly as a neurospecific transcription factor. Belongs to the neuron-specific chromatin remodeling complex (nBAF complex) and plays a role in neural development. This is Zinc finger protein neuro-d4 from Gallus gallus (Chicken).